A 254-amino-acid polypeptide reads, in one-letter code: Probable transcriptional regulatory protein MAE_13580 (254 aa).

It belongs to the TACO1 family.

Its subcellular location is the cytoplasm. The sequence is that of Probable transcriptional regulatory protein MAE_13580 from Microcystis aeruginosa (strain NIES-843 / IAM M-2473).